The following is a 728-amino-acid chain: Methionine--tRNA ligase (728 aa).

The short motif at Pro13–His23 is the 'HIGH' region element. Zn(2+) contacts are provided by Cys144, Cys147, Cys157, and Cys160. A 'KMSKS' region motif is present at residues Lys348–Ser352. Lys351 provides a ligand contact to ATP. Residues Leu585–Ser620 form a disordered region. The region spanning Asp628–Lys728 is the tRNA-binding domain.

The protein belongs to the class-I aminoacyl-tRNA synthetase family. MetG type 1 subfamily. Homodimer. Zn(2+) is required as a cofactor.

Its subcellular location is the cytoplasm. It carries out the reaction tRNA(Met) + L-methionine + ATP = L-methionyl-tRNA(Met) + AMP + diphosphate. Is required not only for elongation of protein synthesis but also for the initiation of all mRNA translation through initiator tRNA(fMet) aminoacylation. In Nitrosospira multiformis (strain ATCC 25196 / NCIMB 11849 / C 71), this protein is Methionine--tRNA ligase.